The sequence spans 399 residues: Acetylornithine aminotransferase (399 aa).

Pyridoxal 5'-phosphate is bound by residues Gly99–Ala100 and Phe132. Arg135 lines the N(2)-acetyl-L-ornithine pocket. Asp217–Gln220 lines the pyridoxal 5'-phosphate pocket. Position 246 is an N6-(pyridoxal phosphate)lysine (Lys246). Thr274 serves as a coordination point for N(2)-acetyl-L-ornithine. Pyridoxal 5'-phosphate is bound at residue Thr275.

It belongs to the class-III pyridoxal-phosphate-dependent aminotransferase family. ArgD subfamily. As to quaternary structure, homodimer. Pyridoxal 5'-phosphate serves as cofactor.

The protein localises to the cytoplasm. The catalysed reaction is N(2)-acetyl-L-ornithine + 2-oxoglutarate = N-acetyl-L-glutamate 5-semialdehyde + L-glutamate. It participates in amino-acid biosynthesis; L-arginine biosynthesis; N(2)-acetyl-L-ornithine from L-glutamate: step 4/4. The protein is Acetylornithine aminotransferase of Agrobacterium fabrum (strain C58 / ATCC 33970) (Agrobacterium tumefaciens (strain C58)).